The chain runs to 276 residues: Eukaryotic translation initiation factor 3 subunit G-2 (276 aa).

The region spanning 196–274 is the RRM domain; the sequence is SAVRISNLSE…LILCVEWSKP (79 aa).

Belongs to the eIF-3 subunit G family. As to quaternary structure, component of the eukaryotic translation initiation factor 3 (eIF-3) complex. The eIF-3 complex interacts with pix.

It localises to the cytoplasm. Functionally, RNA-binding component of the eukaryotic translation initiation factor 3 (eIF-3) complex, which is involved in protein synthesis of a specialized repertoire of mRNAs and, together with other initiation factors, stimulates binding of mRNA and methionyl-tRNAi to the 40S ribosome. The eIF-3 complex specifically targets and initiates translation of a subset of mRNAs involved in cell proliferation. This subunit can bind 18S rRNA. The polypeptide is Eukaryotic translation initiation factor 3 subunit G-2 (Drosophila persimilis (Fruit fly)).